The primary structure comprises 601 residues: Ubiquitin carboxyl-terminal hydrolase MINDY-2 (601 aa).

The interval 1-205 (MENSPDSPQP…LCKEEEEDPA (205 aa)) is disordered. Positions 24-34 (EGRRRGGREAE) are enriched in basic and acidic residues. T62 is subject to Phosphothreonine. S82 is subject to Phosphoserine. Composition is skewed to low complexity over residues 127-141 (EEPS…SCSE), 148-169 (SPSL…SSEF), and 186-195 (GAAGPPRAAP). The active-site Nucleophile is the C244. The Proton acceptor role is filled by H426. The interval 485-537 (GQQDQIDQDYLMALSLQQEQQSQEINWEQIPEGISDLELAKKLQEEEDRRASQ) is ubiquitin-binding domain (UBD). A disordered region spans residues 534-601 (RASQYYQEQE…EKEKNSCVIL (68 aa)). Residues 536–570 (SQYYQEQEQAQAVVTTTTPSTQAQQGQPAQASPSS) are compositionally biased toward low complexity. Over residues 577–601 (SERKRKEPREKDKEKEKEKNSCVIL) the composition is skewed to basic and acidic residues.

This sequence belongs to the MINDY deubiquitinase family. FAM63 subfamily.

It catalyses the reaction Thiol-dependent hydrolysis of ester, thioester, amide, peptide and isopeptide bonds formed by the C-terminal Gly of ubiquitin (a 76-residue protein attached to proteins as an intracellular targeting signal).. Functionally, hydrolase that can remove 'Lys-48'-linked conjugated ubiquitin from proteins. Can also bind to polyubiquitin chains of different linkage types, including 'Lys-6', 'Lys-11', 'Lys-29', 'Lys-33' and 'Lys-63'. May play a regulatory role at the level of protein turnover. The protein is Ubiquitin carboxyl-terminal hydrolase MINDY-2 (Mindy2) of Mus musculus (Mouse).